We begin with the raw amino-acid sequence, 276 residues long: Aldo-keto reductase Mjls_1919 (276 aa).

Tyrosine 50 (proton donor) is an active-site residue. Positions 190, 228, 230, 231, 232, 236, 239, and 240 each coordinate NADPH.

Belongs to the aldo/keto reductase family.

The polypeptide is Aldo-keto reductase Mjls_1919 (Mycobacterium sp. (strain JLS)).